The sequence spans 178 residues: Large ribosomal subunit protein uL6 (178 aa).

It belongs to the universal ribosomal protein uL6 family. As to quaternary structure, part of the 50S ribosomal subunit.

Functionally, this protein binds to the 23S rRNA, and is important in its secondary structure. It is located near the subunit interface in the base of the L7/L12 stalk, and near the tRNA binding site of the peptidyltransferase center. This chain is Large ribosomal subunit protein uL6, found in Streptococcus uberis (strain ATCC BAA-854 / 0140J).